The primary structure comprises 100 residues: uncharacterized protein (100 aa).

This is an uncharacterized protein from Acidianus convivator (ATV).